A 344-amino-acid polypeptide reads, in one-letter code: Methylthioribose-1-phosphate isomerase (344 aa).

Substrate contacts are provided by residues R46–A48, R89, and Q196. The Proton donor role is filled by D237. Position 247–248 (N247–K248) interacts with substrate.

It belongs to the eIF-2B alpha/beta/delta subunits family. MtnA subfamily.

The enzyme catalyses 5-(methylsulfanyl)-alpha-D-ribose 1-phosphate = 5-(methylsulfanyl)-D-ribulose 1-phosphate. Its pathway is amino-acid biosynthesis; L-methionine biosynthesis via salvage pathway; L-methionine from S-methyl-5-thio-alpha-D-ribose 1-phosphate: step 1/6. In terms of biological role, catalyzes the interconversion of methylthioribose-1-phosphate (MTR-1-P) into methylthioribulose-1-phosphate (MTRu-1-P). In Syntrophotalea carbinolica (strain DSM 2380 / NBRC 103641 / GraBd1) (Pelobacter carbinolicus), this protein is Methylthioribose-1-phosphate isomerase.